Consider the following 316-residue polypeptide: tRNA selenocysteine 1-associated protein 1-like (316 aa).

RRM domains are found at residues 6–89 and 99–178; these read TSLW…YATY and FSVF…IAVN. Over residues 239-248 the composition is skewed to pro residues; it reads PPMGMPPMPP. Residues 239–285 form a disordered region; it reads PPMGMPPMPPDMQGSTEAHDGTEEVEEDPSEDPNPQVDVEELNRQYM.

This sequence belongs to the RRM TRSPAP family.

The protein localises to the nucleus. Its subcellular location is the cytoplasm. Functionally, involved in the early steps of selenocysteine biosynthesis and tRNA(Sec) charging to the later steps resulting in the cotranslational incorporation of selenocysteine into selenoproteins. This Danio rerio (Zebrafish) protein is tRNA selenocysteine 1-associated protein 1-like (trnau1apl).